We begin with the raw amino-acid sequence, 267 residues long: NAD kinase 2 (267 aa).

Aspartate 52 serves as the catalytic Proton acceptor. Residues 52–53 (DG), 124–125 (NE), arginine 151, aspartate 153, 164–169 (TGYNKS), and alanine 188 contribute to the NAD(+) site.

The protein belongs to the NAD kinase family. A divalent metal cation is required as a cofactor.

Its subcellular location is the cytoplasm. The enzyme catalyses NAD(+) + ATP = ADP + NADP(+) + H(+). Involved in the regulation of the intracellular balance of NAD and NADP, and is a key enzyme in the biosynthesis of NADP. Catalyzes specifically the phosphorylation on 2'-hydroxyl of the adenosine moiety of NAD to yield NADP. In Geobacillus kaustophilus (strain HTA426), this protein is NAD kinase 2.